The following is a 151-amino-acid chain: uncharacterized protein (151 aa).

BON domains lie at 2 to 68 (DDAA…AVDK) and 78 to 146 (IDSA…RLKH).

This is an uncharacterized protein from Anaplasma centrale.